A 119-amino-acid polypeptide reads, in one-letter code: Small ribosomal subunit protein uS13 (119 aa).

Positions 93-119 (RRGLPLRGQRTRSNARTRKGKRKPIRS) are disordered.

It belongs to the universal ribosomal protein uS13 family. Part of the 30S ribosomal subunit. Forms a loose heterodimer with protein S19. Forms two bridges to the 50S subunit in the 70S ribosome.

Located at the top of the head of the 30S subunit, it contacts several helices of the 16S rRNA. In the 70S ribosome it contacts the 23S rRNA (bridge B1a) and protein L5 of the 50S subunit (bridge B1b), connecting the 2 subunits; these bridges are implicated in subunit movement. Contacts the tRNAs in the A and P-sites. The protein is Small ribosomal subunit protein uS13 of Coxiella burnetii (strain RSA 493 / Nine Mile phase I).